Consider the following 196-residue polypeptide: Imidazoleglycerol-phosphate dehydratase (196 aa).

It belongs to the imidazoleglycerol-phosphate dehydratase family.

Its subcellular location is the cytoplasm. The catalysed reaction is D-erythro-1-(imidazol-4-yl)glycerol 3-phosphate = 3-(imidazol-4-yl)-2-oxopropyl phosphate + H2O. It functions in the pathway amino-acid biosynthesis; L-histidine biosynthesis; L-histidine from 5-phospho-alpha-D-ribose 1-diphosphate: step 6/9. The chain is Imidazoleglycerol-phosphate dehydratase from Moorella thermoacetica (strain ATCC 39073 / JCM 9320).